A 609-amino-acid chain; its full sequence is MGSVTPIPLPKIDEPEEYNTNYILFWNHVGLELNRVTHTVGGPLTGPPLSARALGMLHLAIHDAYFSICPPTDFTTFLSPDTENAAYRLPSPNGANDARQAVAGAALKMLSSLYMKPVEQPNPNPGANISDNAYAQLGLVLDRSVLEAPGGVDRESASFMFGEDVADVFFALLNDPRGASQEGYHPTPGRYKFDDEPTHPVVLIPVDPNNPNGPKMPFRQYHAPFYGKTTKRFATQSEHFLADPPGLRSNADETAEYDDAVRVAIAMGGAQALNSTKRSPWQTAQGLYWAYDGSNLIGTPPRFYNQIVRRIAVTYKKEEDLANSEVNNADFARLFALVDVACTDAGIFSWKEKWEFEFWRPLSGVRDDGRPDHGDPFWLTLGAPATNTNDIPFKPPFPAYPSGHATFGGAVFQMVRRYYNGRVGTWKDDEPDNIAIDMMISEELNGVNRDLRQPYDPTAPIEDQPGIVRTRIVRHFDSAWELMFENAISRIFLGVHWRFDAAAARDILIPTTTKDVYAVDNNGATVFQNVEDIRYTTRGTREDPEGLFPIGGVPLGIEIADEIFNNGLKPTPPEIQPMPQETPVQKPVGQQPVKGMWEEEQAPVVKEAP.

Vanadate is bound by residues lysine 353, arginine 360, serine 402, glycine 403, histidine 404, arginine 490, and histidine 496. Histidine 404 functions as the Proton donor in the catalytic mechanism. The segment at 569–609 (KPTPPEIQPMPQETPVQKPVGQQPVKGMWEEEQAPVVKEAP) is disordered.

It belongs to the vanadium-dependent haloperoxidase family. As to quaternary structure, homotetramer. Vanadate serves as cofactor. The N-terminus is blocked.

Its subcellular location is the secreted. It carries out the reaction RH + Cl(-) + H2O2 = RCl + 2 H2O.. Its function is as follows. Catalyzes the oxidation of chloride in the presence of hydrogen peroxide to hypochlorous acid (ClOH), which in turn can react with a nucleophilic acceptor (RH), to form a chlorinated compound. The polypeptide is Vanadium chloroperoxidase (CPO) (Curvularia inaequalis (Helminthosporium inaequale)).